Reading from the N-terminus, the 613-residue chain is tRNA 5-methylaminomethyl-2-thiouridine biosynthesis bifunctional protein MnmC (613 aa).

A tRNA (mnm(5)s(2)U34)-methyltransferase region spans residues 1 to 225 (MKKAKLIFKD…KREMIKAYLE (225 aa)). Positions 252–613 (IGAGISSAVL…FLIRKLKKGL (362 aa)) are FAD-dependent cmnm(5)s(2)U34 oxidoreductase.

It in the N-terminal section; belongs to the methyltransferase superfamily. tRNA (mnm(5)s(2)U34)-methyltransferase family. In the C-terminal section; belongs to the DAO family. The cofactor is FAD.

The protein localises to the cytoplasm. It carries out the reaction 5-aminomethyl-2-thiouridine(34) in tRNA + S-adenosyl-L-methionine = 5-methylaminomethyl-2-thiouridine(34) in tRNA + S-adenosyl-L-homocysteine + H(+). Functionally, catalyzes the last two steps in the biosynthesis of 5-methylaminomethyl-2-thiouridine (mnm(5)s(2)U) at the wobble position (U34) in tRNA. Catalyzes the FAD-dependent demodification of cmnm(5)s(2)U34 to nm(5)s(2)U34, followed by the transfer of a methyl group from S-adenosyl-L-methionine to nm(5)s(2)U34, to form mnm(5)s(2)U34. The sequence is that of tRNA 5-methylaminomethyl-2-thiouridine biosynthesis bifunctional protein MnmC from Campylobacter jejuni (strain RM1221).